Here is an 80-residue protein sequence, read N- to C-terminus: Large ribosomal subunit protein bL28 (80 aa).

The tract at residues 1–21 (MSRICQITRKKSMKGNSVAHS) is disordered.

It belongs to the bacterial ribosomal protein bL28 family.

This chain is Large ribosomal subunit protein bL28, found in Azobacteroides pseudotrichonymphae genomovar. CFP2.